The chain runs to 119 residues: Large ribosomal subunit protein uL18 (119 aa).

This sequence belongs to the universal ribosomal protein uL18 family. Part of the 50S ribosomal subunit; part of the 5S rRNA/L5/L18/L25 subcomplex. Contacts the 5S and 23S rRNAs.

Its function is as follows. This is one of the proteins that bind and probably mediate the attachment of the 5S RNA into the large ribosomal subunit, where it forms part of the central protuberance. This chain is Large ribosomal subunit protein uL18, found in Borrelia hermsii (strain HS1 / DAH).